The chain runs to 371 residues: Macronuclear solute carrier homolog CR-MSC (371 aa).

Solcar repeat units lie at residues 16–111, 120–208, and 215–304; these read RMNY…FYDK, ARPD…CKEN, and PHWI…LSQF. 6 helical membrane-spanning segments follow: residues 22–42, 89–109, 126–146, 184–204, 221–241, and 281–301; these read FAAA…LDMV, TFFF…GYFY, VAAG…IDIV, AGAN…IYDW, LWGT…FDMI, and FGSF…ICYL.

Belongs to the mitochondrial carrier (TC 2.A.29) family.

It localises to the membrane. The chain is Macronuclear solute carrier homolog CR-MSC from Oxytricha fallax.